The sequence spans 273 residues: Large ribosomal subunit protein uL2cz/uL2cy (273 aa).

Disordered regions lie at residues 1–23 (MAIH…SQVK) and 224–273 (NPVD…RRRK).

This sequence belongs to the universal ribosomal protein uL2 family. As to quaternary structure, part of the 50S ribosomal subunit.

The protein localises to the plastid. It localises to the chloroplast. The chain is Large ribosomal subunit protein uL2cz/uL2cy (rpl2-A) from Amborella trichopoda.